The primary structure comprises 2210 residues: Mediator of RNA polymerase II transcription subunit 13-like (2210 aa).

Polar residues predominate over residues 391–400 (SKRSQMSTPT). Disordered regions lie at residues 391–414 (SKRSQMSTPTLEEEPASNPATWDF), 435–489 (AVGP…PFHH), and 519–582 (VSSS…NPAL). Residues 445 to 458 (SQPGFSAGPSSSSS) show a composition bias toward low complexity. Positions 468-480 (KTAERQEKGDKLQ) are enriched in basic and acidic residues. Residues 533-544 (SRNTSKQMNLNP) are compositionally biased toward polar residues. Residues 551-560 (PISPLPPTLS) are compositionally biased toward pro residues. Phosphoserine occurs at positions 553 and 560. The LXXLL motif 1 motif lies at 669–673 (LQRLL). The segment covering 736–752 (GTEKDSLKKNKSEDGFG) has biased composition (basic and acidic residues). The disordered stretch occupies residues 736-770 (GTEKDSLKKNKSEDGFGTKDVTTPGHSTPVPDGKN). Phosphoserine is present on residues Ser-817, Ser-826, and Ser-923. The segment at 1016–1096 (PQMNTPVTLN…STTRPLNSVE (81 aa)) is disordered. Positions 1025-1036 (NSAAPASNSGAG) are enriched in low complexity. The segment covering 1077–1092 (TDQGSPASTPSTTRPL) has biased composition (polar residues). The LXXLL motif 2 signature appears at 1225–1229 (LLLLL). A leucine-zipper region spans residues 1380-1401 (LPIPTLLVGYDKDFLTISPFSL). 2 disordered regions span residues 1530-1656 (QTPP…VTER) and 2045-2080 (GNLHSSPNSSPVPSPGSPSGIGVGSHFQHSRSQGER). The segment covering 1531-1608 (TPPAAAQGQA…ISTTSSSGFS (78 aa)) has biased composition (low complexity). Over residues 1615 to 1629 (NPSTGGISADRTQGN) the composition is skewed to polar residues. Low complexity predominate over residues 1637–1650 (DPGQSSSQPSQDGQ). Ser-2083 bears the Phosphoserine mark.

The protein belongs to the Mediator complex subunit 13 family. In terms of assembly, component of the Mediator complex, which is composed of MED1, MED4, MED6, MED7, MED8, MED9, MED10, MED11, MED12, MED13, MED13L, MED14, MED15, MED16, MED17, MED18, MED19, MED20, MED21, MED22, MED23, MED24, MED25, MED26, MED27, MED29, MED30, MED31, CCNC, CDK8 and CDC2L6/CDK11. The MED12, MED13, CCNC and CDK8 subunits form a distinct module termed the CDK8 module. Mediator containing the CDK8 module is less active than Mediator lacking this module in supporting transcriptional activation. Individual preparations of the Mediator complex lacking one or more distinct subunits have been variously termed ARC, CRSP, DRIP, PC2, SMCC and TRAP. As to expression, highly expressed in brain (cerebellum), heart (aorta), skeletal muscle, kidney, placenta and peripheral blood leukocytes. Highly expressed in fetal brain.

The protein resides in the nucleus. Component of the Mediator complex, a coactivator involved in the regulated transcription of nearly all RNA polymerase II-dependent genes. Mediator functions as a bridge to convey information from gene-specific regulatory proteins to the basal RNA polymerase II transcription machinery. Mediator is recruited to promoters by direct interactions with regulatory proteins and serves as a scaffold for the assembly of a functional preinitiation complex with RNA polymerase II and the general transcription factors. This subunit may specifically regulate transcription of targets of the Wnt signaling pathway and SHH signaling pathway. This Homo sapiens (Human) protein is Mediator of RNA polymerase II transcription subunit 13-like (MED13L).